The sequence spans 668 residues: Chitin synthase 8 (668 aa).

Positions 1 to 26 (MTSRMPTSGHRTSSSSSERGNMSVQQ) are enriched in polar residues. The interval 1–62 (MTSRMPTSGH…PAPLRPGWTL (62 aa)) is disordered. N-linked (GlcNAc...) asparagine glycans are attached at residues Asn21, Asn98, and Asn101. 2 helical membrane-spanning segments follow: residues 136 to 156 (WSLIIGLAGINGALIYIGWKY) and 162 to 182 (FFLVLLSSNTVLQSFMCICII). N-linked (GlcNAc...) asparagine glycosylation is found at Asn216 and Asn476. 4 helical membrane passes run 522–542 (WALGSISNEFVMIFRPGIILI), 548–568 (LIAVITWAITPFIIAAFVELL), 583–603 (VFLGLICVLFFRYLYSFCIGF), and 615–635 (YFAGYVMHLFTSPFMNIIILV).

Belongs to the chitin synthase family. Class VIII subfamily.

The protein resides in the cell membrane. Its subcellular location is the cell septum. It catalyses the reaction [(1-&gt;4)-N-acetyl-beta-D-glucosaminyl](n) + UDP-N-acetyl-alpha-D-glucosamine = [(1-&gt;4)-N-acetyl-beta-D-glucosaminyl](n+1) + UDP + H(+). Functionally, polymerizes chitin, a structural polymer of the cell wall and septum, by transferring the sugar moiety of UDP-GlcNAc to the non-reducing end of the growing chitin polymer. Participated in the development of cell wall and plays a critical role in fungal response to environmental stresses. Necessary for pathogenicity and deoxinivalenol (DON) production. The protein is Chitin synthase 8 of Gibberella zeae (strain ATCC MYA-4620 / CBS 123657 / FGSC 9075 / NRRL 31084 / PH-1) (Wheat head blight fungus).